We begin with the raw amino-acid sequence, 175 residues long: MDVKDFIRTIPDYPKPGILFRDITTLLSDPEGFRGAVDALVSLHKGAKFDVVAGIEARGFILGGAVAHQLGLGFIPVRKKGKLPFTTIGQEYDLEYGTDMVEIHTDAVKPDQRVLLIDDLIATGGTAEAAVKLIARAGGNVLASSFVIELPELGGRARLEALDIEVLSLCSFEGH.

This sequence belongs to the purine/pyrimidine phosphoribosyltransferase family. In terms of assembly, homodimer.

The protein localises to the cytoplasm. The catalysed reaction is AMP + diphosphate = 5-phospho-alpha-D-ribose 1-diphosphate + adenine. It functions in the pathway purine metabolism; AMP biosynthesis via salvage pathway; AMP from adenine: step 1/1. Its function is as follows. Catalyzes a salvage reaction resulting in the formation of AMP, that is energically less costly than de novo synthesis. The chain is Adenine phosphoribosyltransferase from Parvibaculum lavamentivorans (strain DS-1 / DSM 13023 / NCIMB 13966).